Reading from the N-terminus, the 199-residue chain is Recombination protein RecR (199 aa).

Residues 60–75 (CARCHTFTEGEVCSTC) form a C4-type zinc finger. The Toprim domain maps to 83-178 (SRLAVVETPA…HVTRLARGVP (96 aa)).

It belongs to the RecR family.

Functionally, may play a role in DNA repair. It seems to be involved in an RecBC-independent recombinational process of DNA repair. It may act with RecF and RecO. The protein is Recombination protein RecR of Paracidovorax citrulli (strain AAC00-1) (Acidovorax citrulli).